Reading from the N-terminus, the 779-residue chain is Acyl-CoA dehydrogenase family member 11 (779 aa).

The residue at position 175 (Lys-175) is an N6-acetyllysine. Ser-210 carries the phosphoserine modification. At Tyr-323 the chain carries Phosphotyrosine. Lys-368 and Lys-390 each carry N6-succinyllysine. Residues 503–513, 511–513, 537–539, and Ser-539 contribute to the FAD site; these read FCMTEPNVSSS, SSS, and WSS. Residue Ser-513 coordinates substrate. 628–631 serves as a coordination point for substrate; the sequence is GPGR. FAD-binding positions include Arg-656, Gln-726, and 726 to 730; that span reads QVHGG. Residue Gly-754 coordinates substrate. Residues 755 to 757 and Glu-757 contribute to the FAD site; that span reads PDE. Lys-765 is modified (N6-acetyllysine).

This sequence belongs to the acyl-CoA dehydrogenase family. Homodimer. FAD is required as a cofactor.

The protein localises to the peroxisome. It localises to the mitochondrion membrane. It catalyses the reaction a 2,3-saturated acyl-CoA + oxidized [electron-transfer flavoprotein] + H(+) = a (2E)-enoyl-CoA + reduced [electron-transfer flavoprotein]. The enzyme catalyses docosanoyl-CoA + oxidized [electron-transfer flavoprotein] + H(+) = (2E)-docosenoyl-CoA + reduced [electron-transfer flavoprotein]. The catalysed reaction is tetracosanoyl-CoA + oxidized [electron-transfer flavoprotein] + H(+) = (2E)-tetracosenoyl-CoA + reduced [electron-transfer flavoprotein]. It carries out the reaction eicosanoyl-CoA + oxidized [electron-transfer flavoprotein] + H(+) = (2E)-eicosenoyl-CoA + reduced [electron-transfer flavoprotein]. It catalyses the reaction hexacosanoyl-CoA + oxidized [electron-transfer flavoprotein] + H(+) = (2E)-hexacosenoyl-CoA + reduced [electron-transfer flavoprotein]. The enzyme catalyses tricosanoyl-CoA + oxidized [electron-transfer flavoprotein] + H(+) = (2E)-tricosenoyl-CoA + reduced [electron-transfer flavoprotein]. It functions in the pathway lipid metabolism; fatty acid beta-oxidation. Functionally, acyl-CoA dehydrogenase, that exhibits maximal activity towards saturated C22-CoA. Probably participates in beta-oxydation and energy production but could also play a role in the metabolism of specific fatty acids to control fatty acids composition of cellular lipids in brain. The chain is Acyl-CoA dehydrogenase family member 11 (Acad11) from Rattus norvegicus (Rat).